A 152-amino-acid chain; its full sequence is Deoxyuridine 5'-triphosphate nucleotidohydrolase (152 aa).

Substrate is bound by residues 72 to 74, Asn-85, 89 to 91, and Lys-99; these read RSG and TID.

It belongs to the dUTPase family. Mg(2+) is required as a cofactor.

The catalysed reaction is dUTP + H2O = dUMP + diphosphate + H(+). It functions in the pathway pyrimidine metabolism; dUMP biosynthesis; dUMP from dCTP (dUTP route): step 2/2. Its function is as follows. This enzyme is involved in nucleotide metabolism: it produces dUMP, the immediate precursor of thymidine nucleotides and it decreases the intracellular concentration of dUTP so that uracil cannot be incorporated into DNA. The sequence is that of Deoxyuridine 5'-triphosphate nucleotidohydrolase from Bradyrhizobium diazoefficiens (strain JCM 10833 / BCRC 13528 / IAM 13628 / NBRC 14792 / USDA 110).